We begin with the raw amino-acid sequence, 92 residues long: DNA/RNA-binding protein Alba (92 aa).

Lys-11 is subject to N6-acetyllysine.

This sequence belongs to the histone-like Alba family. Post-translationally, acetylated. Acetylation at Lys-11 decreases DNA-binding affinity.

The protein resides in the cytoplasm. Its subcellular location is the chromosome. Functionally, binds double-stranded DNA tightly but without sequence specificity. Involved in DNA compaction. The polypeptide is DNA/RNA-binding protein Alba (Pyrobaculum islandicum (strain DSM 4184 / JCM 9189 / GEO3)).